A 137-amino-acid polypeptide reads, in one-letter code: Putative pre-16S rRNA nuclease (137 aa).

The protein belongs to the YqgF nuclease family.

It localises to the cytoplasm. In terms of biological role, could be a nuclease involved in processing of the 5'-end of pre-16S rRNA. The protein is Putative pre-16S rRNA nuclease of Anaeromyxobacter dehalogenans (strain 2CP-C).